A 414-amino-acid chain; its full sequence is Snake venom metalloproteinase atrolysin-B (414 aa).

The first 20 residues, 1–20 (MIEVLLVTICLAVFPYQGSS), serve as a signal peptide directing secretion. Residues 21 to 190 (IILESGNVND…KASDLNLNPD (170 aa)) constitute a propeptide that is removed on maturation. Gln-191 bears the Pyrrolidone carboxylic acid mark. One can recognise a Peptidase M12B domain in the interval 197-393 (RYIELVVVAD…YKPQCILNKP (197 aa)). Positions 200 and 284 each coordinate Ca(2+). 2 disulfide bridges follow: Cys-308–Cys-388 and Cys-348–Cys-355. His-333 contributes to the Zn(2+) binding site. Residue Glu-334 is part of the active site. Residues His-337 and His-343 each contribute to the Zn(2+) site. Positions 388, 391, 403, 406, 408, 410, and 413 each coordinate Ca(2+). A propeptide spanning residues 394-414 (LRIDPVSTPVSGNELLEAGEE) is cleaved from the precursor.

It belongs to the venom metalloproteinase (M12B) family. P-I subfamily. In terms of assembly, monomer. Zn(2+) is required as a cofactor. The N-terminus is blocked. In terms of tissue distribution, expressed by the venom gland.

It is found in the secreted. The enzyme catalyses Cleavage of 5-His-|-Leu-6, 10-His-|-Leu-11, 14-Ala-|-Leu-15, 16-Tyr-|-Leu-17 and 23-Gly-|-Phe-24 of insulin B chain. Identical to the cleavage of insulin B chain by atrolysin C. Also cleaves Xaa-|-Ser bonds in glucagon.. Its function is as follows. Snake venom metalloproteinase that impairs hemostasis in the envenomed animal. The polypeptide is Snake venom metalloproteinase atrolysin-B (Crotalus atrox (Western diamondback rattlesnake)).